We begin with the raw amino-acid sequence, 356 residues long: UDP-N-acetylglucosamine--N-acetylmuramyl-(pentapeptide) pyrophosphoryl-undecaprenol N-acetylglucosamine transferase (356 aa).

UDP-N-acetyl-alpha-D-glucosamine is bound by residues 11-13 (TGG), Asn117, Arg160, Ser188, and Gln290.

The protein belongs to the glycosyltransferase 28 family. MurG subfamily.

It localises to the cell inner membrane. It catalyses the reaction di-trans,octa-cis-undecaprenyl diphospho-N-acetyl-alpha-D-muramoyl-L-alanyl-D-glutamyl-meso-2,6-diaminopimeloyl-D-alanyl-D-alanine + UDP-N-acetyl-alpha-D-glucosamine = di-trans,octa-cis-undecaprenyl diphospho-[N-acetyl-alpha-D-glucosaminyl-(1-&gt;4)]-N-acetyl-alpha-D-muramoyl-L-alanyl-D-glutamyl-meso-2,6-diaminopimeloyl-D-alanyl-D-alanine + UDP + H(+). The protein operates within cell wall biogenesis; peptidoglycan biosynthesis. Cell wall formation. Catalyzes the transfer of a GlcNAc subunit on undecaprenyl-pyrophosphoryl-MurNAc-pentapeptide (lipid intermediate I) to form undecaprenyl-pyrophosphoryl-MurNAc-(pentapeptide)GlcNAc (lipid intermediate II). This Rickettsia bellii (strain RML369-C) protein is UDP-N-acetylglucosamine--N-acetylmuramyl-(pentapeptide) pyrophosphoryl-undecaprenol N-acetylglucosamine transferase.